We begin with the raw amino-acid sequence, 688 residues long: PHD finger protein 21A (688 aa).

K65 is covalently cross-linked (Glycyl lysine isopeptide (Lys-Gly) (interchain with G-Cter in SUMO2)). Disordered regions lie at residues 78-127 (SQSE…LTAS) and 327-373 (PQTV…ENPQ). Residues 85-127 (QTAQQQPLQPLQQQQPQQPQQQQQQQQQHAQQSAAAPPSLTAS) show a composition bias toward low complexity. A compositionally biased stretch (basic and acidic residues) spans 336-354 (SLEKQTVKSHPEAEEKQAE). A DNA-binding region (a.T hook) is located at residues 434–446 (TRKRGRPPKYNAV). A disordered region spans residues 449-471 (FGALTPTSPPSSHPDSPENEKTE). Phosphothreonine is present on T453. At S456 the chain carries Phosphoserine. The segment at 497-544 (EDFCSVCRKSGQLLMCDTCSRVYHLDCLEPPLKTIPKGMWICPRCQDQ) adopts a PHD-type zinc-finger fold. Residues 571 to 609 (KEEEKQKLLKWSSDLKQEREQLEQKVKELSSSISKCMEM) are a coiled coil. The interval 650 to 688 (GALSNGPDCTPPANAASTPAPSPSSQSCTANCNQGEETK) is disordered. A compositionally biased stretch (low complexity) spans 660–679 (PPANAASTPAPSPSSQSCTA).

In terms of assembly, component of a BHC histone deacetylase complex that contains HDAC1, HDAC2, HMG20B/BRAF35, KDM1A, RCOR1/CoREST and PHF21A/BHC80. The BHC complex may also contain ZMYM2, ZNF217, ZMYM3, GSE1 and GTF2I. In the complex, it interacts directly with HDAC1, HDAC2, HMG20B/BRAF35, KDM1A and RCOR1/CoREST. In terms of tissue distribution, expressed in the brain and testis. Weakly or not expressed in other tissues tested. Localized throughout the central nervous system (CNS) in brain, including the cerebellum, hippocampus, and cortex. Notably present in neuronal cells of granular cell layer and dentate gyrus in cerebellum and hippocampus, respectively. In the seminiferous tubules, the signals it is present strongly in spermatocytes, and weakly in spermatogonia and round spermatids. In some cases, it is also observed solely in spermatocytes (at protein level).

Its subcellular location is the nucleus. Its function is as follows. Component of the BHC complex, a corepressor complex that represses transcription of neuron-specific genes in non-neuronal cells. The BHC complex is recruited at RE1/NRSE sites by REST and acts by deacetylating and demethylating specific sites on histones, thereby acting as a chromatin modifier. In the BHC complex, it may act as a scaffold. Inhibits KDM1A-mediated demethylation of 'Lys-4' of histone H3 in vitro, suggesting a role in demethylation regulation. The sequence is that of PHD finger protein 21A from Mus musculus (Mouse).